The primary structure comprises 155 residues: MSENTIYSGLKQLGSHTDIPLTPEEAVLERVANPQEGTPYCVRFTAPEFTSLCPMTGQPDFAHLVIDYVPGKWLVESKSLKLFLFSFRNHGAFHEDCTVTIGKRLVDLLEPEWLRIGGYWYPRGGIPIDVFYQTGAAPLNVWIPEQGVANYRGRG.

Cys-53 acts as the Thioimide intermediate in catalysis. The Proton donor role is filled by Asp-60. Residues 75 to 77 and 94 to 95 each bind substrate; these read VES and HE.

The protein belongs to the GTP cyclohydrolase I family. QueF type 1 subfamily.

The protein localises to the cytoplasm. The catalysed reaction is 7-aminomethyl-7-carbaguanine + 2 NADP(+) = 7-cyano-7-deazaguanine + 2 NADPH + 3 H(+). Its pathway is tRNA modification; tRNA-queuosine biosynthesis. Its function is as follows. Catalyzes the NADPH-dependent reduction of 7-cyano-7-deazaguanine (preQ0) to 7-aminomethyl-7-deazaguanine (preQ1). The chain is NADPH-dependent 7-cyano-7-deazaguanine reductase from Brucella suis (strain ATCC 23445 / NCTC 10510).